Consider the following 199-residue polypeptide: 3-isopropylmalate dehydratase small subunit (199 aa).

The protein belongs to the LeuD family. LeuD type 1 subfamily. In terms of assembly, heterodimer of LeuC and LeuD.

The catalysed reaction is (2R,3S)-3-isopropylmalate = (2S)-2-isopropylmalate. The protein operates within amino-acid biosynthesis; L-leucine biosynthesis; L-leucine from 3-methyl-2-oxobutanoate: step 2/4. Catalyzes the isomerization between 2-isopropylmalate and 3-isopropylmalate, via the formation of 2-isopropylmaleate. In Tolumonas auensis (strain DSM 9187 / NBRC 110442 / TA 4), this protein is 3-isopropylmalate dehydratase small subunit.